Reading from the N-terminus, the 762-residue chain is cGMP-dependent protein kinase 2 (762 aa).

Residues 1–26 (MGNGSVKPKHAKHPDGHSGNLSNEAL) are disordered. The N-myristoyl glycine moiety is linked to residue G2. S110 and S117 each carry phosphoserine. The interval 118 to 138 (RRGAKAGVSAEPTTRTYDLNK) is disordered. The interval 168 to 283 (FLKRLDPQQI…DEEYRNFLRS (116 aa)) is cGMP-binding, high affinity; cAMP-binding, moderate affinity. Residues 232–235 (GELA), 242–243 (RT), K347, 356–359 (GEKA), 366–367 (RS), D412, and R415 contribute to the 3',5'-cyclic GMP site. The tract at residues 286-416 (LLKNLPEDKL…TLNRDDEKRH (131 aa)) is cGMP-binding, high affinity; cAMP-binding, low affinity. S431 bears the Phosphoserine mark. Residues 453 to 711 (LEIIATLGVG…INDIKKHRWL (259 aa)) form the Protein kinase domain. ATP contacts are provided by residues 459–467 (LGVGGFGRV) and K482. D576 serves as the catalytic Proton acceptor. T609 is subject to Phosphothreonine. Residues 712 to 762 (NGFNWEGLKARSLPSPLRRELSGPIDHSYFDKYPPEKGVPPDEMSGWDKDF) form the AGC-kinase C-terminal domain. The segment at 740 to 762 (YFDKYPPEKGVPPDEMSGWDKDF) is disordered.

Belongs to the protein kinase superfamily. AGC Ser/Thr protein kinase family. cGMP subfamily. As to quaternary structure, interacts with GRIA1/GLUR1. In terms of processing, myristoylation mediates membrane localization.

It localises to the apical cell membrane. The protein localises to the cell membrane. It carries out the reaction L-seryl-[protein] + ATP = O-phospho-L-seryl-[protein] + ADP + H(+). The catalysed reaction is L-threonyl-[protein] + ATP = O-phospho-L-threonyl-[protein] + ADP + H(+). With respect to regulation, binding of cGMP results in enzyme activation. Functionally, crucial regulator of intestinal secretion and bone growth. Phosphorylates and activates CFTR on the plasma membrane. Plays a key role in intestinal secretion by regulating cGMP-dependent translocation of CFTR in jejunum. Acts downstream of NMDAR to activate the plasma membrane accumulation of GRIA1/GLUR1 in synapse and increase synaptic plasticity. Phosphorylates GRIA1/GLUR1 at Ser-863. Acts as a regulator of gene expression and activator of the extracellular signal-regulated kinases MAPK3/ERK1 and MAPK1/ERK2 in mechanically stimulated osteoblasts. Under fluid shear stress, mediates ERK activation and subsequent induction of FOS, FOSL1/FRA1, FOSL2/FRA2 and FOSB that play a key role in the osteoblast anabolic response to mechanical stimulation. In Mus musculus (Mouse), this protein is cGMP-dependent protein kinase 2 (Prkg2).